A 393-amino-acid polypeptide reads, in one-letter code: Arginine--pyruvate transaminase AruH (393 aa).

Lys237 is modified (N6-(pyridoxal phosphate)lysine).

Belongs to the class-I pyridoxal-phosphate-dependent aminotransferase family. As to quaternary structure, homodimer. Pyridoxal 5'-phosphate is required as a cofactor.

The enzyme catalyses L-arginine + pyruvate = 5-guanidino-2-oxopentanoate + L-alanine. It functions in the pathway amino-acid degradation; L-arginine degradation. Catalyzes the conversion of L-arginine into 2-ketoarginine via transamination. L-arginine is the best substrate, but it can also use L-lysine, L-methionine, L-leucine, ornithine and L-glutamine, which indicates that it may have a broader physiological function in amino acid catabolism. In Pseudomonas aeruginosa (strain ATCC 15692 / DSM 22644 / CIP 104116 / JCM 14847 / LMG 12228 / 1C / PRS 101 / PAO1), this protein is Arginine--pyruvate transaminase AruH (aruH).